Here is a 430-residue protein sequence, read N- to C-terminus: Histidine--tRNA ligase (430 aa).

The protein belongs to the class-II aminoacyl-tRNA synthetase family. As to quaternary structure, homodimer.

The protein resides in the cytoplasm. The enzyme catalyses tRNA(His) + L-histidine + ATP = L-histidyl-tRNA(His) + AMP + diphosphate + H(+). This Chlorobium luteolum (strain DSM 273 / BCRC 81028 / 2530) (Pelodictyon luteolum) protein is Histidine--tRNA ligase.